The primary structure comprises 208 residues: Small ribosomal subunit protein uS4 (208 aa).

In terms of domain architecture, S4 RNA-binding spans 97–158 (TRLDNVIYRM…RAQKYLCVQE (62 aa)).

It belongs to the universal ribosomal protein uS4 family. In terms of assembly, part of the 30S ribosomal subunit. Contacts protein S5. The interaction surface between S4 and S5 is involved in control of translational fidelity.

One of the primary rRNA binding proteins, it binds directly to 16S rRNA where it nucleates assembly of the body of the 30S subunit. Its function is as follows. With S5 and S12 plays an important role in translational accuracy. The chain is Small ribosomal subunit protein uS4 from Xylella fastidiosa (strain 9a5c).